A 76-amino-acid chain; its full sequence is Kappa-actitoxin-Avd4n (76 aa).

Positions 1–19 (MNKAFFLCLVVLCAAVVFA) are cleaved as a signal peptide. The propeptide occupies 20–31 (AEDLQKGKHAPF). 2 disulfide bridges follow: Cys-37-Cys-72 and Cys-39-Cys-65.

Belongs to the sea anemone type 3 (BDS) potassium channel toxin family. Post-translationally, lacks the conventional Cys residue at position 55. Thus, only 2 disulfide are possible present. As to expression, experimental results show no expression in the ectodermal tissue from the distal and proximal tentacles, body wall, and oral disk. Since paralogs are expressed in this tissue, an expression of this toxin in this tissue is probable. The negative results could be explained by the very low abundance of EST sequences.

It localises to the secreted. It is found in the nematocyst. In terms of biological role, blocks Kv3 voltage-gated potassium channels. Reduces blood pressure. In Anemonia viridis (Snakelocks anemone), this protein is Kappa-actitoxin-Avd4n.